A 388-amino-acid chain; its full sequence is F-box protein At5g42460 (388 aa).

Positions 1–47 (MTIMSDLPRDLLAEILSRVPLTSLRAVRLTCKKWNDLSKDRSFLKKQ) constitute an F-box domain.

This is F-box protein At5g42460 from Arabidopsis thaliana (Mouse-ear cress).